The sequence spans 347 residues: NADH-ubiquinone oxidoreductase chain 2 (347 aa).

Helical transmembrane passes span 1-21, 25-45, 60-80, 96-116, 127-147, 149-169, 178-198, 202-222, 239-259, 274-294, and 326-346; these read MNPM…SIVM, HWFL…PVLM, FLTQ…NLMF, MLLT…FWVP, GLIL…QIYP, INTN…GWGG, IMAY…IYNP, LLNL…LIFA, IITI…PLTG, NSVI…FFYM, and MMPL…FILL.

The protein belongs to the complex I subunit 2 family. Core subunit of respiratory chain NADH dehydrogenase (Complex I) which is composed of 45 different subunits. Interacts with TMEM242.

The protein resides in the mitochondrion inner membrane. The catalysed reaction is a ubiquinone + NADH + 5 H(+)(in) = a ubiquinol + NAD(+) + 4 H(+)(out). Its function is as follows. Core subunit of the mitochondrial membrane respiratory chain NADH dehydrogenase (Complex I) that is believed to belong to the minimal assembly required for catalysis. Complex I functions in the transfer of electrons from NADH to the respiratory chain. The immediate electron acceptor for the enzyme is believed to be ubiquinone. This chain is NADH-ubiquinone oxidoreductase chain 2, found in Suncus etruscus (Etruscan shrew).